A 132-amino-acid chain; its full sequence is Phosphoribosyl-AMP cyclohydrolase (132 aa).

Asp89 lines the Mg(2+) pocket. Residue Cys90 coordinates Zn(2+). Residues Asp91 and Asp93 each coordinate Mg(2+). The Zn(2+) site is built by Cys106 and Cys113.

The protein belongs to the PRA-CH family. In terms of assembly, homodimer. The cofactor is Mg(2+). Requires Zn(2+) as cofactor.

Its subcellular location is the cytoplasm. The enzyme catalyses 1-(5-phospho-beta-D-ribosyl)-5'-AMP + H2O = 1-(5-phospho-beta-D-ribosyl)-5-[(5-phospho-beta-D-ribosylamino)methylideneamino]imidazole-4-carboxamide. It functions in the pathway amino-acid biosynthesis; L-histidine biosynthesis; L-histidine from 5-phospho-alpha-D-ribose 1-diphosphate: step 3/9. In terms of biological role, catalyzes the hydrolysis of the adenine ring of phosphoribosyl-AMP. The polypeptide is Phosphoribosyl-AMP cyclohydrolase (Renibacterium salmoninarum (strain ATCC 33209 / DSM 20767 / JCM 11484 / NBRC 15589 / NCIMB 2235)).